Consider the following 419-residue polypeptide: Tyrosine--tRNA ligase (419 aa).

L-tyrosine is bound at residue tyrosine 42. Positions 47–56 (ATAPSLHVGS) match the 'HIGH' region motif. The L-tyrosine site is built by tyrosine 179 and glutamine 183. The short motif at 239–243 (KMGKT) is the 'KMSKS' region element. Lysine 242 contacts ATP. An S4 RNA-binding domain is found at 353-418 (VVLAALFADA…GKKKIVLVKP (66 aa)).

It belongs to the class-I aminoacyl-tRNA synthetase family. TyrS type 1 subfamily. As to quaternary structure, homodimer.

It is found in the cytoplasm. It catalyses the reaction tRNA(Tyr) + L-tyrosine + ATP = L-tyrosyl-tRNA(Tyr) + AMP + diphosphate + H(+). In terms of biological role, catalyzes the attachment of tyrosine to tRNA(Tyr) in a two-step reaction: tyrosine is first activated by ATP to form Tyr-AMP and then transferred to the acceptor end of tRNA(Tyr). This Caulobacter vibrioides (strain ATCC 19089 / CIP 103742 / CB 15) (Caulobacter crescentus) protein is Tyrosine--tRNA ligase.